The chain runs to 275 residues: uncharacterized protein (275 aa).

Positions 97, 102, 136, and 140 each coordinate [4Fe-4S] cluster. Cys140 is a binding site for siroheme.

Belongs to the nitrite and sulfite reductase 4Fe-4S domain family.

This is an uncharacterized protein from Methanocaldococcus jannaschii (strain ATCC 43067 / DSM 2661 / JAL-1 / JCM 10045 / NBRC 100440) (Methanococcus jannaschii).